The primary structure comprises 155 residues: Ribonuclease H (155 aa).

Residues 4 to 145 (ETKVIEIYTD…ADALARKAIT (142 aa)) form the RNase H type-1 domain. Mg(2+) contacts are provided by Asp-13, Glu-51, Asp-73, and Asp-137.

This sequence belongs to the RNase H family. Monomer. Requires Mg(2+) as cofactor.

It localises to the cytoplasm. The catalysed reaction is Endonucleolytic cleavage to 5'-phosphomonoester.. Endonuclease that specifically degrades the RNA of RNA-DNA hybrids. This chain is Ribonuclease H, found in Bartonella bacilliformis (strain ATCC 35685 / KC583 / Herrer 020/F12,63).